The chain runs to 463 residues: Bifunctional protein HldE (463 aa).

The ribokinase stretch occupies residues 1 to 311 (MKKILVVGDL…EEIALILNQT (311 aa)). 191-194 (NRFE) is a binding site for ATP. D260 is an active-site residue. The interval 334 to 463 (FTNGCFDLLH…IEKIKRTCND (130 aa)) is cytidylyltransferase.

This sequence in the N-terminal section; belongs to the carbohydrate kinase PfkB family. In the C-terminal section; belongs to the cytidylyltransferase family. In terms of assembly, homodimer.

It catalyses the reaction D-glycero-beta-D-manno-heptose 7-phosphate + ATP = D-glycero-beta-D-manno-heptose 1,7-bisphosphate + ADP + H(+). The catalysed reaction is D-glycero-beta-D-manno-heptose 1-phosphate + ATP + H(+) = ADP-D-glycero-beta-D-manno-heptose + diphosphate. Its pathway is nucleotide-sugar biosynthesis; ADP-L-glycero-beta-D-manno-heptose biosynthesis; ADP-L-glycero-beta-D-manno-heptose from D-glycero-beta-D-manno-heptose 7-phosphate: step 1/4. The protein operates within nucleotide-sugar biosynthesis; ADP-L-glycero-beta-D-manno-heptose biosynthesis; ADP-L-glycero-beta-D-manno-heptose from D-glycero-beta-D-manno-heptose 7-phosphate: step 3/4. Catalyzes the phosphorylation of D-glycero-D-manno-heptose 7-phosphate at the C-1 position to selectively form D-glycero-beta-D-manno-heptose-1,7-bisphosphate. Its function is as follows. Catalyzes the ADP transfer from ATP to D-glycero-beta-D-manno-heptose 1-phosphate, yielding ADP-D-glycero-beta-D-manno-heptose. The polypeptide is Bifunctional protein HldE (Helicobacter pylori (strain G27)).